The primary structure comprises 442 residues: Dihydrolipoyllysine-residue acetyltransferase component of pyruvate dehydrogenase complex (442 aa).

One can recognise a Lipoyl-binding domain in the interval 2–77; that stretch reads AFEFKLPDIG…TVGQTIITFD (76 aa). Lys43 carries the post-translational modification N6-lipoyllysine. The span at 84-97 shows a compositional bias: basic and acidic residues; that stretch reads LQFKGSDESDDAKT. A disordered region spans residues 84–136; that stretch reads LQFKGSDESDDAKTEAQVQSTAEAGQDVAKEEQAQEPAKATGAGQQDQAEVDP. The 38-residue stretch at 141-178 folds into the Peripheral subunit-binding (PSBD) domain; the sequence is IAMPSVRKYAREKGVDIRKVTGSGNNGRVVKEDIDSFV. The span at 182–208 shows a compositional bias: low complexity; sequence AQEAAPQETAAPQETAAKPAAAPAPEG. Residues 182-215 are disordered; it reads AQEAAPQETAAPQETAAKPAAAPAPEGEFPETRE. His413 is a catalytic residue.

It belongs to the 2-oxoacid dehydrogenase family. Forms a 24-polypeptide structural core with octahedral symmetry. (R)-lipoate is required as a cofactor.

It catalyses the reaction N(6)-[(R)-dihydrolipoyl]-L-lysyl-[protein] + acetyl-CoA = N(6)-[(R)-S(8)-acetyldihydrolipoyl]-L-lysyl-[protein] + CoA. Its function is as follows. The pyruvate dehydrogenase complex catalyzes the overall conversion of pyruvate to acetyl-CoA and CO(2). It contains multiple copies of three enzymatic components: pyruvate dehydrogenase (E1), dihydrolipoamide acetyltransferase (E2) and lipoamide dehydrogenase (E3). The B.subtilis PDH complex also possesses branched-chain 2-oxoacid dehydrogenase (BCDH) activity. The protein is Dihydrolipoyllysine-residue acetyltransferase component of pyruvate dehydrogenase complex (pdhC) of Bacillus subtilis (strain 168).